The following is a 182-amino-acid chain: MIKFSIRGENIEVTEAIRDYVESKLTKIEKYFAKDQEIDARVNLKVYRERSSKVEVTIPLDSVTLRAEDVSQDMYGSIDLVVDKIERQIRKNKTKIAKKHREKVPTGQVFTTEFEAEEVDEIPEVQVVRTKNVTLKPMDVEEARLQMELLGHDFFIYTDSEDGATNILYRREDGNLGLIEAK.

This sequence belongs to the HPF/YfiA ribosome-associated protein family. Long HPF subfamily. In terms of assembly, interacts with 100S ribosomes.

The protein resides in the cytoplasm. Required for dimerization of active 70S ribosomes into 100S ribosomes in stationary phase; 100S ribosomes are translationally inactive and sometimes present during exponential growth. In Streptococcus pyogenes serotype M6 (strain ATCC BAA-946 / MGAS10394), this protein is Ribosome hibernation promotion factor.